A 314-amino-acid chain; its full sequence is Glycine--tRNA ligase alpha subunit (314 aa).

The protein belongs to the class-II aminoacyl-tRNA synthetase family. In terms of assembly, tetramer of two alpha and two beta subunits.

It is found in the cytoplasm. It catalyses the reaction tRNA(Gly) + glycine + ATP = glycyl-tRNA(Gly) + AMP + diphosphate. In Leuconostoc citreum (strain KM20), this protein is Glycine--tRNA ligase alpha subunit.